Reading from the N-terminus, the 386-residue chain is N-acetylneuraminate epimerase (386 aa).

The signal sequence occupies residues 1-29; the sequence is MGMQMKNFKKMMTLMALCFSVAITTSGYA. 7 Kelch repeats span residues 51 to 95, 97 to 149, 151 to 186, 187 to 232, 235 to 284, 306 to 355, and 357 to 386; these read VIYV…VFLN, ELYV…VKLN, TMVL…KVIY, NYFN…VMGN, LMLI…LAGA, QNYT…SYGD, and VFLI…LLIK. E241 acts as the Proton acceptor in catalysis.

It belongs to the NanM family. Homodimer.

It localises to the periplasm. It carries out the reaction N-acetyl-alpha-neuraminate = N-acetyl-beta-neuraminate. Functionally, converts alpha-N-acetylneuranimic acid (Neu5Ac) to the beta-anomer, accelerating the equilibrium between the alpha- and beta-anomers. Probably facilitates sialidase-negative bacteria to compete successfully for limited amounts of extracellular Neu5Ac, which is likely taken up in the beta-anomer. In addition, the rapid removal of sialic acid from solution might be advantageous to the bacterium to damp down host responses. The polypeptide is N-acetylneuraminate epimerase (Salmonella typhimurium (strain LT2 / SGSC1412 / ATCC 700720)).